The primary structure comprises 314 residues: MSNYPPTVAAQPTTTANPLLQRHQSEQRRRELPKIVETESTSMDITIGQSKQPQFLKSIDELAAFSVAVETFKRQFDDLQKHIESIENAIDSKLESNGVVLAARNNNFHQPMLSPPRNNVSVETTVTVSQPSQEIVPETSNKPEGERICELMCSKGLRKYIYANISDQAKLMEEIPSALKLAKEPAKFVLDCIGKFYLQGRRAFTKESPMSSARQVSLLILESFLLMPDRGKGKVKIESWIKDEAETAAVAWRKRLMTEGGLAAAEKMDARGLLLLVACFGVPSNFRSTDLLDLIRMSGSNEIAGALKRSQFQV.

Residues 1–18 (MSNYPPTVAAQPTTTANP) are compositionally biased toward low complexity. The tract at residues 1 to 31 (MSNYPPTVAAQPTTTANPLLQRHQSEQRRRE) is disordered. The stretch at 67 to 97 (VAVETFKRQFDDLQKHIESIENAIDSKLESN) forms a coiled coil.

This sequence belongs to the Frigida family.

The protein resides in the nucleus. This chain is Inactive protein FRIGIDA (FRI), found in Arabidopsis thaliana (Mouse-ear cress).